The primary structure comprises 898 residues: MLPSSGDSSKENCAPQDGIVEKEGPNKPFKKKNVKQRNATPQGAGSETSSNAEDKQEEAPILTNAPKDIISMQIQETKAFLSEYEEFVDTDYPKTTFTHVPRKFLSVSPFTPIEADAEGEFLPDADSKCVICHEEKDKTGKSDLITCHGYINGEMDDGKRLLGNIPMFPCRSKFHASCMINYNSGGFHFQYAARLECQARLLCPLHCCNSCNLDHHKQSAYVGDIAECALCLRAFHLTSCYPSGGRDLNVSITIGGKVEKFEMIICPAHYLPGADVQFYNKHKKRKNAVTVVPKADVTMKSHIKACCVIGCEKSSNSKTIMCKTCCRSFHSGCREVETLNGKPIPDDQCESCVCGDPIPQNTLILAKWTDNSFWLALTLDWYKYPTGNRGNINFERLGYTVVQWLIPQENDKEKQPLMSIVPVSDIARLTKNYFSLAKNSTLRNLWEEKYEEQADTALKRCPYVCKTVFGRLRTSVYYKCEPKLEEYHNNEVCNCEGADRCTKLSCQYLADDYECPPSCSKKGVCHNRQVSMGIVSEKIKLAATLCKGYGVFAKGQIEKDEYICEYVGEIIDKAEKKRRLDSVSISRDFQANHYMMELHKGLTVDAARYGNISRYINHSCDPNAASFVTKVFVKKTKEGSLYDTRSYIRAIRTIDDGDEITFSYNMNNEENLPDCECGAENCMGTMGKAKREKPEVADSSEKAAKKNKSSKKKSVKNQNRKSQEAGKNGTASKKSEISPSKPSTSSASSTSFVQQASWPISQNKKNLKKNSNQPVADTGSTLSTSTELNFHEKPQELLSPVSSRSRAASSSTPRAQKSKSRRDDVESEAPPVKRATPSLQTIQETGKAIEFPATKSAITKARALSTQSVPSPHTVEVKVRAISTRGRVQKETKRFEPI.

Positions 1 to 68 (MLPSSGDSSK…APILTNAPKD (68 aa)) are disordered. Residues 36-51 (QRNATPQGAGSETSSN) show a composition bias toward polar residues. PHD-type zinc fingers lie at residues 126-214 (DSKC…CNLD) and 303-355 (IKAC…CVCG). Residues 537–665 (EKIKLAATLC…DGDEITFSYN (129 aa)) form the SET domain. A Post-SET domain is found at 671–687 (NLPDCECGAENCMGTMG). The disordered stretch occupies residues 689 to 847 (AKREKPEVAD…SLQTIQETGK (159 aa)). Residues 692-704 (EKPEVADSSEKAA) show a composition bias toward basic and acidic residues. Residues 705-719 (KKNKSSKKKSVKNQN) show a composition bias toward basic residues. 2 stretches are compositionally biased toward low complexity: residues 737–751 (ISPS…SSTS) and 761–773 (SQNK…NSNQ). A compositionally biased stretch (polar residues) spans 774–788 (PVADTGSTLSTSTEL). A compositionally biased stretch (low complexity) spans 802–811 (SSRSRAASSS).

Belongs to the class V-like SAM-binding methyltransferase superfamily. Histone-lysine methyltransferase family. SET2 subfamily. In terms of tissue distribution, in adults, it is predominantly expressed in the germline, and weakly expressed in intestinal cells.

It is found in the nucleus. Its subcellular location is the chromosome. The catalysed reaction is L-lysyl(36)-[histone H3] + 2 S-adenosyl-L-methionine = N(6),N(6)-dimethyl-L-lysyl(36)-[histone H3] + 2 S-adenosyl-L-homocysteine + 2 H(+). In terms of biological role, histone methyltransferase. Dimethylates 'Lys-36' of histone H3, a specific tag for epigenetic transcriptional activation. Plays a central role in early development and is responsible for all H3 'Lys-36' dimethylation until about the 40-cell stage. Indirectly involved in the global inactivation of the X chromosomes in germline cells, possibly by excluding the mes-2-mes-3-mes-6 repressive Polycomb complex from the autosomes. Not related to transcription elongation. Required for small-RNA-induced H3K27 trimethylation. May suppress sensitivity to RNAi. May regulate the expression of genes required for vulval development. This is Histone-lysine N-methyltransferase mes-4 from Caenorhabditis elegans.